Here is a 502-residue protein sequence, read N- to C-terminus: uncharacterized protein (502 aa).

A helical transmembrane segment spans residues 1–21; sequence MKIFLVILSVFFFNGCFGLAY. 2 consecutive PLD phosphodiesterase domains span residues 162 to 189 and 396 to 423; these read IKKR…GDNY and TKHS…DPRS.

Belongs to the phospholipase D family. Cardiolipin synthase subfamily.

The protein localises to the cell membrane. This is an uncharacterized protein from Helicobacter pylori (strain J99 / ATCC 700824) (Campylobacter pylori J99).